The following is a 119-amino-acid chain: Large ribosomal subunit protein bL20 (119 aa).

It belongs to the bacterial ribosomal protein bL20 family.

Its function is as follows. Binds directly to 23S ribosomal RNA and is necessary for the in vitro assembly process of the 50S ribosomal subunit. It is not involved in the protein synthesizing functions of that subunit. In Nitrosomonas eutropha (strain DSM 101675 / C91 / Nm57), this protein is Large ribosomal subunit protein bL20.